Reading from the N-terminus, the 230-residue chain is Heptaprenylglyceryl phosphate synthase (230 aa).

K12 is a sn-glycerol 1-phosphate binding site. Mg(2+) is bound by residues D14 and T40. Sn-glycerol 1-phosphate is bound by residues 159 to 164 (YIEYSG), G189, and 209 to 210 (GD).

The protein belongs to the GGGP/HepGP synthase family. Group I subfamily. As to quaternary structure, homodimer. Mg(2+) is required as a cofactor.

The catalysed reaction is sn-glycerol 1-phosphate + all-trans-heptaprenyl diphosphate = 3-heptaprenyl-sn-glycero-1-phosphate + diphosphate. The protein operates within membrane lipid metabolism; glycerophospholipid metabolism. In terms of biological role, prenyltransferase that catalyzes in vivo the transfer of the heptaprenyl moiety of heptaprenyl pyrophosphate (HepPP; 35 carbon atoms) to the C3 hydroxyl of sn-glycerol-1-phosphate (G1P), producing heptaprenylglyceryl phosphate (HepGP). This reaction is an ether-bond-formation step in the biosynthesis of archaea-type G1P-based membrane lipids found in Bacillales. In Staphylococcus aureus (strain USA300), this protein is Heptaprenylglyceryl phosphate synthase.